A 323-amino-acid chain; its full sequence is Pectate lyase A (323 aa).

The signal sequence occupies residues M1–R31. N-linked (GlcNAc...) asparagine glycosylation is present at N95. Ca(2+)-binding residues include D136, D165, and D169. R222 is a catalytic residue.

This sequence belongs to the polysaccharide lyase 1 family. Requires Ca(2+) as cofactor.

Its subcellular location is the secreted. It carries out the reaction Eliminative cleavage of (1-&gt;4)-alpha-D-galacturonan to give oligosaccharides with 4-deoxy-alpha-D-galact-4-enuronosyl groups at their non-reducing ends.. Pectinolytic enzyme consist of four classes of enzymes: pectin lyase, polygalacturonase, pectin methylesterase and rhamnogalacturonase. Among pectinolytic enzymes, pectin lyase is the most important in depolymerization of pectin, since it cleaves internal glycosidic bonds of highly methylated pectins. Favors pectate, the anion, over pectin, the methyl ester. The polypeptide is Pectate lyase A (plyA) (Aspergillus niger).